A 100-amino-acid chain; its full sequence is Large ribosomal subunit protein bL21 (100 aa).

This sequence belongs to the bacterial ribosomal protein bL21 family. In terms of assembly, part of the 50S ribosomal subunit. Contacts protein L20.

Its function is as follows. This protein binds to 23S rRNA in the presence of protein L20. The protein is Large ribosomal subunit protein bL21 of Ureaplasma parvum serovar 3 (strain ATCC 27815 / 27 / NCTC 11736).